The following is a 318-amino-acid chain: Biotin synthase (318 aa).

Residues 44–273 (LCGNKFDLCT…TVQIRLAGGR (230 aa)) form the Radical SAM core domain. [4Fe-4S] cluster contacts are provided by C62, C66, and C69. The [2Fe-2S] cluster site is built by S106, C138, C198, and R268.

It belongs to the radical SAM superfamily. Biotin synthase family. Homodimer. Requires [4Fe-4S] cluster as cofactor. [2Fe-2S] cluster serves as cofactor.

The enzyme catalyses (4R,5S)-dethiobiotin + (sulfur carrier)-SH + 2 reduced [2Fe-2S]-[ferredoxin] + 2 S-adenosyl-L-methionine = (sulfur carrier)-H + biotin + 2 5'-deoxyadenosine + 2 L-methionine + 2 oxidized [2Fe-2S]-[ferredoxin]. Its pathway is cofactor biosynthesis; biotin biosynthesis; biotin from 7,8-diaminononanoate: step 2/2. Functionally, catalyzes the conversion of dethiobiotin (DTB) to biotin by the insertion of a sulfur atom into dethiobiotin via a radical-based mechanism. The protein is Biotin synthase of Clostridium botulinum (strain Langeland / NCTC 10281 / Type F).